The chain runs to 188 residues: F7-2 fimbrial protein (188 aa).

Positions 1 to 21 are cleaved as a signal peptide; the sequence is MIKSVIAGAVAMAVVSFGAYA. Cysteine 43 and cysteine 82 are disulfide-bonded.

It belongs to the fimbrial protein family.

Its subcellular location is the fimbrium. In terms of biological role, fimbriae (also called pili), polar filaments radiating from the surface of the bacterium to a length of 0.5-1.5 micrometers and numbering 100-300 per cell, enable bacteria to colonize the epithelium of specific host organs. The sequence is that of F7-2 fimbrial protein (F7-2) from Escherichia coli O6:H1 (strain CFT073 / ATCC 700928 / UPEC).